We begin with the raw amino-acid sequence, 233 residues long: Leucyl/phenylalanyl-tRNA--protein transferase (233 aa).

This sequence belongs to the L/F-transferase family.

Its subcellular location is the cytoplasm. It carries out the reaction N-terminal L-lysyl-[protein] + L-leucyl-tRNA(Leu) = N-terminal L-leucyl-L-lysyl-[protein] + tRNA(Leu) + H(+). The enzyme catalyses N-terminal L-arginyl-[protein] + L-leucyl-tRNA(Leu) = N-terminal L-leucyl-L-arginyl-[protein] + tRNA(Leu) + H(+). The catalysed reaction is L-phenylalanyl-tRNA(Phe) + an N-terminal L-alpha-aminoacyl-[protein] = an N-terminal L-phenylalanyl-L-alpha-aminoacyl-[protein] + tRNA(Phe). Its function is as follows. Functions in the N-end rule pathway of protein degradation where it conjugates Leu, Phe and, less efficiently, Met from aminoacyl-tRNAs to the N-termini of proteins containing an N-terminal arginine or lysine. The polypeptide is Leucyl/phenylalanyl-tRNA--protein transferase (Chromobacterium violaceum (strain ATCC 12472 / DSM 30191 / JCM 1249 / CCUG 213 / NBRC 12614 / NCIMB 9131 / NCTC 9757 / MK)).